We begin with the raw amino-acid sequence, 226 residues long: PKHD-type hydroxylase LHK_00496 (226 aa).

Residues 78–178 (RFFPPLFNRY…RVASFMWIQS (101 aa)) form the Fe2OG dioxygenase domain. Fe cation-binding residues include histidine 96, aspartate 98, and histidine 159. Position 169 (arginine 169) interacts with 2-oxoglutarate.

It depends on Fe(2+) as a cofactor. L-ascorbate is required as a cofactor.

The polypeptide is PKHD-type hydroxylase LHK_00496 (Laribacter hongkongensis (strain HLHK9)).